Consider the following 109-residue polypeptide: MYQLQFINLVYDTTKLTHLEQTNINLFIGNWSNHQLQKSICIRHGDDTSHNQYHILFIDTAHQRIKFSSIDNEEITYILDYDDTQHILMQTSSKQGIGTSRPIVYERLV.

A binds to staphopain B region spans residues 97–101 (IGTSR).

It belongs to the protease inhibitor I57 (SspC) family. In terms of assembly, forms a stable non-covalent complex with prematurely activated/folded SspB.

The protein localises to the cytoplasm. Specifically inhibits the cysteine protease staphopain B (SspB) by blocking the active site of the enzyme. Probably required to protect cytoplasmic proteins from being degraded by prematurely activated/folded prostaphopain B. Also involved in growth capacity, viability and bacterial morphology. The protein is Staphostatin B (sspC) of Staphylococcus aureus (strain Mu50 / ATCC 700699).